Reading from the N-terminus, the 265-residue chain is uncharacterized protein (265 aa).

The chain crosses the membrane as a helical span at residues M1–I21. Residues N74 and N142 are each glycosylated (N-linked (GlcNAc...) asparagine; by host).

It is found in the host membrane. The protein resides in the virion. This is an uncharacterized protein from Acanthamoeba polyphaga mimivirus (APMV).